We begin with the raw amino-acid sequence, 110 residues long: Iron-sulfur cluster assembly protein CyaY (110 aa).

The protein belongs to the frataxin family.

In terms of biological role, involved in iron-sulfur (Fe-S) cluster assembly. May act as a regulator of Fe-S biogenesis. This chain is Iron-sulfur cluster assembly protein CyaY, found in Pseudomonas entomophila (strain L48).